The chain runs to 189 residues: MPRDDPITEEERRANSATDLIRMRLARLQQNIDKPAPIPIKKETLRAPKEPLEFVRNVVGSSAAAGSAEFHIYRNNRRKEQNRLDYIDAVAKKEELDDAYRHKVEKLEKEEESKTAKKRAKRLRQKAAAKKRKLTKKNNESDESSSDDSDSDSGSGSDNESEGKQNTEVEDKDKVEKEETDDEKTEVST.

Positions 105-115 (EKLEKEEESKT) are enriched in basic and acidic residues. The disordered stretch occupies residues 105–189 (EKLEKEEESK…TDDEKTEVST (85 aa)). Residues 116–136 (AKKRAKRLRQKAAAKKRKLTK) show a composition bias toward basic residues. Residues 141–151 (SDESSSDDSDS) are compositionally biased toward acidic residues. Residues 161–177 (SEGKQNTEVEDKDKVEK) are compositionally biased toward basic and acidic residues. Residues 178-189 (EETDDEKTEVST) are compositionally biased toward acidic residues.

This is an uncharacterized protein from Caenorhabditis elegans.